Here is a 427-residue protein sequence, read N- to C-terminus: UDP-N-acetylglucosamine 1-carboxyvinyltransferase (427 aa).

22-23 (KN) serves as a coordination point for phosphoenolpyruvate. Arg92 lines the UDP-N-acetyl-alpha-D-glucosamine pocket. Catalysis depends on Asp116, which acts as the Proton donor. 2 residues coordinate UDP-N-acetyl-alpha-D-glucosamine: Asp312 and Met334.

This sequence belongs to the EPSP synthase family. MurA subfamily.

It localises to the cytoplasm. It carries out the reaction phosphoenolpyruvate + UDP-N-acetyl-alpha-D-glucosamine = UDP-N-acetyl-3-O-(1-carboxyvinyl)-alpha-D-glucosamine + phosphate. It functions in the pathway cell wall biogenesis; peptidoglycan biosynthesis. Functionally, cell wall formation. Adds enolpyruvyl to UDP-N-acetylglucosamine. This is UDP-N-acetylglucosamine 1-carboxyvinyltransferase from Borreliella burgdorferi (strain ATCC 35210 / DSM 4680 / CIP 102532 / B31) (Borrelia burgdorferi).